We begin with the raw amino-acid sequence, 132 residues long: Fatty acid-binding protein 1 (132 aa).

A fatty acid contacts are provided by residues arginine 106 and 128–130 (RYY).

This sequence belongs to the calycin superfamily. Fatty-acid binding protein (FABP) family. In terms of assembly, monomer. As to expression, midgut.

The protein localises to the cytoplasm. Functionally, binds fatty acids in a 1:1 molar ratio. This is Fatty acid-binding protein 1 (MFB1) from Manduca sexta (Tobacco hawkmoth).